Reading from the N-terminus, the 1296-residue chain is Phosphoribosylformylglycinamidine synthase (1296 aa).

The interval 304-323 (WPGAATGSGGEIRDEGATGR) is disordered. ATP contacts are provided by residues 306–317 (GAATGSGGEIRD) and Ala677. Positions 678, 717, 721, and 885 each coordinate Mg(2+). An ATP-binding site is contributed by Ser887. Basic and acidic residues predominate over residues 1000–1013 (PDCADQEHQAKQDE). A disordered region spans residues 1000–1019 (PDCADQEHQAKQDESDPGLN). The Glutamine amidotransferase type-1 domain occupies 1043–1296 (VAVLREQGVN…MFRNARKQLG (254 aa)). The Nucleophile role is filled by Cys1136. Residues His1261 and Glu1263 contribute to the active site.

The protein in the N-terminal section; belongs to the FGAMS family. Monomer.

It localises to the cytoplasm. It catalyses the reaction N(2)-formyl-N(1)-(5-phospho-beta-D-ribosyl)glycinamide + L-glutamine + ATP + H2O = 2-formamido-N(1)-(5-O-phospho-beta-D-ribosyl)acetamidine + L-glutamate + ADP + phosphate + H(+). The protein operates within purine metabolism; IMP biosynthesis via de novo pathway; 5-amino-1-(5-phospho-D-ribosyl)imidazole from N(2)-formyl-N(1)-(5-phospho-D-ribosyl)glycinamide: step 1/2. Phosphoribosylformylglycinamidine synthase involved in the purines biosynthetic pathway. Catalyzes the ATP-dependent conversion of formylglycinamide ribonucleotide (FGAR) and glutamine to yield formylglycinamidine ribonucleotide (FGAM) and glutamate. This chain is Phosphoribosylformylglycinamidine synthase, found in Yersinia pestis bv. Antiqua (strain Antiqua).